The sequence spans 289 residues: Diaminopimelate epimerase (289 aa).

The substrate site is built by N13, Q47, and N67. Catalysis depends on C76, which acts as the Proton donor. Substrate is bound by residues 77–78, N167, N200, and 218–219; these read GN and ER. Catalysis depends on C227, which acts as the Proton acceptor. 228–229 provides a ligand contact to substrate; sequence GT.

Belongs to the diaminopimelate epimerase family. In terms of assembly, homodimer.

It localises to the cytoplasm. It carries out the reaction (2S,6S)-2,6-diaminopimelate = meso-2,6-diaminopimelate. It functions in the pathway amino-acid biosynthesis; L-lysine biosynthesis via DAP pathway; DL-2,6-diaminopimelate from LL-2,6-diaminopimelate: step 1/1. Catalyzes the stereoinversion of LL-2,6-diaminopimelate (L,L-DAP) to meso-diaminopimelate (meso-DAP), a precursor of L-lysine and an essential component of the bacterial peptidoglycan. This is Diaminopimelate epimerase from Burkholderia vietnamiensis (strain G4 / LMG 22486) (Burkholderia cepacia (strain R1808)).